The following is a 400-amino-acid chain: Queuine tRNA-ribosyltransferase (400 aa).

The Proton acceptor role is filled by aspartate 93. Residues aspartate 93–phenylalanine 97, aspartate 147, glutamine 190, and glycine 217 each bind substrate. The tract at residues glycine 248 to aspartate 254 is RNA binding. Residue aspartate 267 is the Nucleophile of the active site. The interval threonine 272–arginine 276 is RNA binding; important for wobble base 34 recognition. Zn(2+) is bound by residues cysteine 305, cysteine 307, cysteine 310, and histidine 336. The segment at arginine 375–arginine 400 is disordered. Positions alanine 388 to arginine 400 are enriched in low complexity.

Belongs to the queuine tRNA-ribosyltransferase family. As to quaternary structure, homodimer. Within each dimer, one monomer is responsible for RNA recognition and catalysis, while the other monomer binds to the replacement base PreQ1. Zn(2+) serves as cofactor.

The enzyme catalyses 7-aminomethyl-7-carbaguanine + guanosine(34) in tRNA = 7-aminomethyl-7-carbaguanosine(34) in tRNA + guanine. Its pathway is tRNA modification; tRNA-queuosine biosynthesis. Catalyzes the base-exchange of a guanine (G) residue with the queuine precursor 7-aminomethyl-7-deazaguanine (PreQ1) at position 34 (anticodon wobble position) in tRNAs with GU(N) anticodons (tRNA-Asp, -Asn, -His and -Tyr). Catalysis occurs through a double-displacement mechanism. The nucleophile active site attacks the C1' of nucleotide 34 to detach the guanine base from the RNA, forming a covalent enzyme-RNA intermediate. The proton acceptor active site deprotonates the incoming PreQ1, allowing a nucleophilic attack on the C1' of the ribose to form the product. After dissociation, two additional enzymatic reactions on the tRNA convert PreQ1 to queuine (Q), resulting in the hypermodified nucleoside queuosine (7-(((4,5-cis-dihydroxy-2-cyclopenten-1-yl)amino)methyl)-7-deazaguanosine). In Symbiobacterium thermophilum (strain DSM 24528 / JCM 14929 / IAM 14863 / T), this protein is Queuine tRNA-ribosyltransferase.